A 21-amino-acid chain; its full sequence is Granulitoxin (21 aa).

The interval 1–21 (AKTGILDSDGPTVAGNSLSGT) is disordered.

Its subcellular location is the secreted. It is found in the nematocyst. In terms of biological role, injection into mice produces severe neurotoxic effects such as circular movements, aggressive behavior, dyspnea, tonic-clonic convulsion and death. The chain is Granulitoxin from Bunodosoma cangicum (Sea anemone).